A 585-amino-acid polypeptide reads, in one-letter code: Bifunctional lycopene cyclase/phytoene synthase (585 aa).

Residues 1–243 (MGFDYAIVHV…IVFGQLAFDN (243 aa)) are lycopene beta-cyclase. 7 helical membrane passes run 3–23 (FDYAIVHVKYTIPPAVLLTLL), 35–55 (KVLFLVTVAVTATIPWDSYLI), 75–97 (IPLEEVFFFFIQTYNTTLLYLIL), 123–141 (LAGQLFLVGATVWAGLRVH), 151–171 (LIVVWAAPIILLQWTLAYQFI), 173–193 (GLPWTNTVLPIAIPTLYLWLV), and 221–241 (IEEALFFFVTNTLIVFGQLAF). Residues 250–585 (TFPALFPKPP…AWRTLNKSIA (336 aa)) form a phytoene synthase region.

The protein in the N-terminal section; belongs to the lycopene beta-cyclase family. This sequence in the C-terminal section; belongs to the phytoene/squalene synthase family.

The protein resides in the membrane. It carries out the reaction all-trans-lycopene = gamma-carotene. It catalyses the reaction gamma-carotene = all-trans-beta-carotene. The catalysed reaction is 2 (2E,6E,10E)-geranylgeranyl diphosphate = 15-cis-phytoene + 2 diphosphate. The protein operates within carotenoid biosynthesis; beta-carotene biosynthesis. It participates in carotenoid biosynthesis; phytoene biosynthesis; all-trans-phytoene from geranylgeranyl diphosphate: step 1/1. Its function is as follows. Bifunctional enzyme that catalyzes the reactions from geranylgeranyl diphosphate to phytoene (phytoene synthase) and lycopene to beta-carotene via the intermediate gamma-carotene (lycopene cyclase). This is Bifunctional lycopene cyclase/phytoene synthase from Phaeosphaeria nodorum (strain SN15 / ATCC MYA-4574 / FGSC 10173) (Glume blotch fungus).